Here is a 94-residue protein sequence, read N- to C-terminus: Phormicin (94 aa).

The signal sequence occupies residues 1–23 (MKFFMVFVVTFCLAVCFVSQSLA). Residues 24–54 (IPADAANDAHFVDGVQALKEIEPELHGRYKR) constitute a propeptide that is removed on maturation. Cystine bridges form between Cys-57–Cys-84, Cys-70–Cys-90, and Cys-74–Cys-92.

Belongs to the invertebrate defensin family. Type 1 subfamily.

It localises to the secreted. In terms of biological role, responsible for the anti Gram-positive activity of immune hemolymph of P.terraenovae. The chain is Phormicin from Protophormia terraenovae (Northern blowfly).